A 371-amino-acid polypeptide reads, in one-letter code: MSLMPFAPSRPLSIGVELELQLLGCNDYNLAPSAPEILRRVAKRTHPGEIKPEMTRSMIEINTSVQQEYAGLVTELRALRDVVSEAGCFLNVAVAGGGTHPFQHWSEQKIFDAPRFHYLSELYGYLAKQFTIFGQHVHIGCPGPDEALHLTHMLSRYIPHFIALSASSPFVQGHDTGFASARLNSVFSFPLSGRAPFVLRWNDFEKFFAKMTGTGVVESMKDFYWDIRPKPEFGTIEVRVCDTPLTVEIAASIACYIQAMSRYIMVEQRMAPEEDDYLVYTFNRFQACRFGLEGVFIDPRTHQQRSIREDIMEMLEHISDHARELHAVEAMERIREILIVGNGTSWQRRAYASEHNLADVMQLQAELWMGN.

Belongs to the glutamate--cysteine ligase type 2 family. YbdK subfamily.

The catalysed reaction is L-cysteine + L-glutamate + ATP = gamma-L-glutamyl-L-cysteine + ADP + phosphate + H(+). ATP-dependent carboxylate-amine ligase which exhibits weak glutamate--cysteine ligase activity. The polypeptide is Putative glutamate--cysteine ligase 2 (Nitrosospira multiformis (strain ATCC 25196 / NCIMB 11849 / C 71)).